A 197-amino-acid chain; its full sequence is MISSLRGEVLEVALDHVVIEAAGVGYRVNATPSTLATLRQGTDARLITAMIVREDSMTLYGFVDGETRDLFLTLLSVSGVGPRLAMATLSVHDANGLRQALADGDVTALTRVPGIGKRGAERMVVELRDKVGPAGSAATAPAVNGHTVRAPVVEALVGLGFAAKQAEEATDKVLAGDGEATTSSALRAALSLLGKAR.

The interval 1 to 63 (MISSLRGEVL…EDSMTLYGFV (63 aa)) is domain I. A domain II region spans residues 64–139 (DGETRDLFLT…KVGPAGSAAT (76 aa)). The flexible linker stretch occupies residues 139–143 (TAPAV). Residues 144–197 (NGHTVRAPVVEALVGLGFAAKQAEEATDKVLAGDGEATTSSALRAALSLLGKAR) form a domain III region.

The protein belongs to the RuvA family. Homotetramer. Forms an RuvA(8)-RuvB(12)-Holliday junction (HJ) complex. HJ DNA is sandwiched between 2 RuvA tetramers; dsDNA enters through RuvA and exits via RuvB. An RuvB hexamer assembles on each DNA strand where it exits the tetramer. Each RuvB hexamer is contacted by two RuvA subunits (via domain III) on 2 adjacent RuvB subunits; this complex drives branch migration. In the full resolvosome a probable DNA-RuvA(4)-RuvB(12)-RuvC(2) complex forms which resolves the HJ.

It localises to the cytoplasm. In terms of biological role, the RuvA-RuvB-RuvC complex processes Holliday junction (HJ) DNA during genetic recombination and DNA repair, while the RuvA-RuvB complex plays an important role in the rescue of blocked DNA replication forks via replication fork reversal (RFR). RuvA specifically binds to HJ cruciform DNA, conferring on it an open structure. The RuvB hexamer acts as an ATP-dependent pump, pulling dsDNA into and through the RuvAB complex. HJ branch migration allows RuvC to scan DNA until it finds its consensus sequence, where it cleaves and resolves the cruciform DNA. This Mycobacterium marinum (strain ATCC BAA-535 / M) protein is Holliday junction branch migration complex subunit RuvA.